Reading from the N-terminus, the 91-residue chain is Small ribosomal subunit protein uS19 (91 aa).

This sequence belongs to the universal ribosomal protein uS19 family.

Protein S19 forms a complex with S13 that binds strongly to the 16S ribosomal RNA. The chain is Small ribosomal subunit protein uS19 from Halorhodospira halophila (strain DSM 244 / SL1) (Ectothiorhodospira halophila (strain DSM 244 / SL1)).